The following is a 623-amino-acid chain: MSKLEQYFDYVKINLASPQRIKKWGERRLPNGQVVGEVTKPETINYRTLKPEMDGLFCERIFGPVKDWECHCGKYKRVRYKGIVCERCGVEVAESKVRRHRMGYIELAAPVTHVWYLKSLPSYISILLDIPLKDVEQVVYFNSYVVTKPGNCTNLRYKQLLSEDEWIAIEDQLYQEDSELTGVEVGIGAEAIQKLLRDIDLEVEAESLREEILVVKGIKKDKSIKRLRVIDNFIATRSDPTWMILTVLPVIPPDLRPMVQLDGGRFATSDLNDLYRRVLNRNNRLIRLQEILAPEIIIRNEKRMLQESVDALIDNGRRGRTVMGANNRPLKSLSDIIEGKQGRFRQNLLGKRVDYSGRSVIVVGPQLELNQCGLPREMALELFQPFVIHKLIQQGLVNNIKAAKRLIQKNELIVWNVLEEVIQGHPILLNRAPTLHRLGIQAFEPILVEGRAIKLHPLVCPAFNADFDGDQMAVHIPLSLEAQAEARMLMLAPYNFLSPATGDPIIMPSQDMVLGCYYLTAENPSQQVNRSLYFSNFDDVLLAYETKLIKLHSYVWVRFNGNVDDDDEKIEEKKLDGNKKLHIYPSRIKKLDQDNNLMVQYILTTPGRILLNNVLFDSLQLQF.

Positions 70, 72, 85, and 88 each coordinate Zn(2+). 3 residues coordinate Mg(2+): aspartate 466, aspartate 468, and aspartate 470.

Belongs to the RNA polymerase beta' chain family. RpoC1 subfamily. In terms of assembly, in plastids the minimal PEP RNA polymerase catalytic core is composed of four subunits: alpha, beta, beta', and beta''. When a (nuclear-encoded) sigma factor is associated with the core the holoenzyme is formed, which can initiate transcription. Requires Mg(2+) as cofactor. Zn(2+) serves as cofactor.

It is found in the plastid. The protein resides in the chloroplast. The catalysed reaction is RNA(n) + a ribonucleoside 5'-triphosphate = RNA(n+1) + diphosphate. DNA-dependent RNA polymerase catalyzes the transcription of DNA into RNA using the four ribonucleoside triphosphates as substrates. The protein is DNA-directed RNA polymerase subunit beta' of Guillardia theta (Cryptophyte).